Consider the following 288-residue polypeptide: Allergen Asp f 7 homolog (288 aa).

The signal sequence occupies residues Met1 to Ala20. 2 stretches are compositionally biased toward low complexity: residues Thr48 to Val107 and Thr117 to Thr129. A disordered region spans residues Thr48–Gly161. Residues Thr130–Lys151 show a composition bias toward pro residues. A glycan (N-linked (GlcNAc...) asparagine) is linked at Asn268.

The protein localises to the secreted. The polypeptide is Allergen Asp f 7 homolog (Arthroderma benhamiae (strain ATCC MYA-4681 / CBS 112371) (Trichophyton mentagrophytes)).